The chain runs to 93 residues: MFWTSVARARSVWKGPNVVDFGVNVQQCIKGNVPIKTAVRSATILPRMVGAQFMVHNGKSYANVKITEDMIGHKLGEFAPTRKAFHYRQTKNR.

This sequence belongs to the universal ribosomal protein uS19 family. As to quaternary structure, component of the mitochondrial small ribosomal subunit (mt-SSU). Mature yeast 74S mitochondrial ribosomes consist of a small (37S) and a large (54S) subunit. The 37S small subunit contains a 15S ribosomal RNA (15S mt-rRNA) and at least 32 different proteins. The 54S large subunit contains a 21S rRNA (21S mt-rRNA) and at least 45 different proteins.

It is found in the mitochondrion. Component of the mitochondrial ribosome (mitoribosome), a dedicated translation machinery responsible for the synthesis of mitochondrial genome-encoded proteins, including at least some of the essential transmembrane subunits of the mitochondrial respiratory chain. The mitoribosomes are attached to the mitochondrial inner membrane and translation products are cotranslationally integrated into the membrane. In Schizosaccharomyces pombe (strain 972 / ATCC 24843) (Fission yeast), this protein is Small ribosomal subunit protein uS19m (rsm19).